Consider the following 305-residue polypeptide: GMP synthase [glutamine-hydrolyzing] subunit B (305 aa).

A GMPS ATP-PPase domain is found at 2 to 184 (VDANAFIDEA…LPLPEEISER (183 aa)). ATP is bound at residue 29 to 35 (SGGVDSS).

As to quaternary structure, heterodimer composed of a glutamine amidotransferase subunit (A) and a GMP-binding subunit (B).

The enzyme catalyses XMP + L-glutamine + ATP + H2O = GMP + L-glutamate + AMP + diphosphate + 2 H(+). Its pathway is purine metabolism; GMP biosynthesis; GMP from XMP (L-Gln route): step 1/1. Functionally, catalyzes the synthesis of GMP from XMP. This is GMP synthase [glutamine-hydrolyzing] subunit B from Methanocella arvoryzae (strain DSM 22066 / NBRC 105507 / MRE50).